We begin with the raw amino-acid sequence, 87 residues long: UPF0213 protein SYNAS_10430 (87 aa).

The 77-residue stretch at 2–78 (SKNYVYILEC…KKMSRAEKLQ (77 aa)) folds into the GIY-YIG domain.

Belongs to the UPF0213 family.

The polypeptide is UPF0213 protein SYNAS_10430 (Syntrophus aciditrophicus (strain SB)).